The following is a 714-amino-acid chain: MALTAALKAQIAAWYKALQDQIPDFIPRAPQRQMIADVARTLAGEEGRHLAIEAPTGVGKTLSYLIPGIAIAREEQKTLVVSTANVALQDQIFSKDLPLLRKIIPDLRFTAAFGRGRYVCPRNLAALASSEPTQQDLLAFLDDELTPNNQEEQKRCARLKGDLDGYKWDGLRDHTDIAIDDDLWRRLSTDKASCLNRNCHYYRECPFFVARREIQEAEVVVANHALVMAAMESEAVLPEPKHLLLVLDEGHHLPDVARDALEMSAEITASWYRLQLDLFSKLVATCMEQFRPKTTPPLANPERLNAHCEEVYELIASLNAILNLYMPAAQEAEHRFAMGELPDEVMEICQRLAKLTETLRGLAESFLNDLSEKTGSHDIMRLHRVILQMNRALGMFEAQSKLWRLASMAQSSGAPVSKWATREIREGQLHVWFHCVGIRVSEQLERLLWCSVPHIIVTSATLRSLNSFSRLQEMSGLKEKAGDRFVALDSPFNHVEQGKLVIPQMRYEPTIDNEEQHIAEMAAYFREQLESKKHHGMLVLFASGRAMQRFLEHVADVRLLLLVQGDQPRYRLVELHRKRVESGERSVLVGLQSFAEGLDLKGELLTQVHIHKIAFPPIDSPVVITEGEWLKSLNRYPFEVQSLPSASFNLIQQVGRLIRSHACRGEVVIYDKRLLTKNYGQRLLNALPVFPIEQPAVPDVIVKPKAKPARRRRR.

The Helicase ATP-binding domain occupies 17 to 294 (ALQDQIPDFI…TCMEQFRPKT (278 aa)). 54-61 (APTGVGKT) serves as a coordination point for ATP. Residues cysteine 120, cysteine 194, cysteine 199, and cysteine 205 each coordinate [4Fe-4S] cluster. The DEAH box motif lies at 248–251 (DEGH). The 182-residue stretch at 517–698 (HIAEMAAYFR…VFPIEQPAVP (182 aa)) folds into the Helicase C-terminal domain.

It belongs to the helicase family. DinG subfamily. Type 1 sub-subfamily. [4Fe-4S] cluster serves as cofactor.

It catalyses the reaction Couples ATP hydrolysis with the unwinding of duplex DNA at the replication fork by translocating in the 5'-3' direction. This creates two antiparallel DNA single strands (ssDNA). The leading ssDNA polymer is the template for DNA polymerase III holoenzyme which synthesizes a continuous strand.. It carries out the reaction ATP + H2O = ADP + phosphate + H(+). Its function is as follows. DNA-dependent ATPase and 5'-3' DNA helicase. Unwinds D-loops, R-loops, forked DNA and G-quadruplex DNA. In Salmonella paratyphi A (strain ATCC 9150 / SARB42), this protein is ATP-dependent DNA helicase DinG.